A 469-amino-acid chain; its full sequence is Acyltransferase clz18 (469 aa).

7 consecutive transmembrane segments (helical) span residues 21 to 41 (GLLS…LGYD), 70 to 90 (LFTI…CLFF), 134 to 154 (LSLL…TGFF), 253 to 273 (ILAA…PLFW), 346 to 366 (GLIV…LYSL), 391 to 411 (IYLI…SWVW), and 424 to 444 (VGFG…AAIF).

The protein belongs to the acyltransferase 3 family.

The protein resides in the membrane. Its pathway is secondary metabolite biosynthesis. Its function is as follows. Acyltransferase; part of the gene cluster that mediates the biosynthesis of squalestatin S1 (SQS1, also known as zaragozic acid A), a heavily oxidized fungal polyketide that offers potent cholesterol lowering activity by targeting squalene synthase (SS). SQS1 is composed of a 2,8-dioxobicyclic[3.2.1]octane-3,4,5-tricarboxyclic acid core that is connected to two lipophilic polyketide arms. These initial steps feature the priming of an unusual benzoic acid starter unit onto the highly reducing polyketide synthase clz14, followed by oxaloacetate extension and product release to generate a tricarboxylic acid containing product. The phenylalanine ammonia lyase (PAL) clz10 and the acyl-CoA ligase clz12 are involved in transforming phenylalanine into benzoyl-CoA. The citrate synthase-like protein clz17 is involved in connecting the C-alpha-carbons of the hexaketide chain and oxaloacetate to afford the tricarboxylic acid unit. The potential hydrolytic enzymes, clz11 and clz13, are in close proximity to pks2 and may participate in product release. On the other side, the tetraketide arm is synthesized by a the squalestatin tetraketide synthase clz2 and enzymatically esterified to the core in the last biosynthetic step, by the acetyltransferase clz6. The biosynthesis of the tetraketide must involve 3 rounds of chain extension. After the first and second rounds methyl-transfer occurs, and in all rounds of extension the ketoreductase and dehydratase are active. The enoyl reductase and C-MeT of clz2 are not active in the final round of extension. The acetyltransferase clz6 appears to have a broad substrate selectivity for its acyl CoA substrate, allowing the in vitro synthesis of novel squalestatins. The biosynthesis of SQS1 requires several oxidative steps likely performed by oxidoreductases clz3, clz15 and clz16. Finally, in support of the identification of the cluster as being responsible for SQS1 production, the cluster contains a gene encoding a putative squalene synthase (SS) clz20, suggesting a likely mechanism for self-resistance. This chain is Acyltransferase clz18, found in Cochliobolus lunatus (Filamentous fungus).